Here is a 272-residue protein sequence, read N- to C-terminus: Phosphate import ATP-binding protein PstB 2 (272 aa).

The ABC transporter domain occupies 26 to 267; sequence IEINNLCLNY…PIHKQTEDYI (242 aa). Residue 58 to 65 coordinates ATP; sequence GPSGCGKS.

This sequence belongs to the ABC transporter superfamily. Phosphate importer (TC 3.A.1.7) family. As to quaternary structure, the complex is composed of two ATP-binding proteins (PstB), two transmembrane proteins (PstC and PstA) and a solute-binding protein (PstS).

It is found in the cell inner membrane. The enzyme catalyses phosphate(out) + ATP + H2O = ADP + 2 phosphate(in) + H(+). Functionally, part of the ABC transporter complex PstSACB involved in phosphate import. Responsible for energy coupling to the transport system. This Aliivibrio fischeri (strain ATCC 700601 / ES114) (Vibrio fischeri) protein is Phosphate import ATP-binding protein PstB 2.